Here is a 205-residue protein sequence, read N- to C-terminus: Small ribosomal subunit protein uS4 (205 aa).

The tract at residues 18–45 (NIWGRPKSPVNRREYGPGQHGQRRKGKL) is disordered. The 64-residue stretch at 94–157 (RRLDTVVYRA…KQLAFVLEAS (64 aa)) folds into the S4 RNA-binding domain.

Belongs to the universal ribosomal protein uS4 family. As to quaternary structure, part of the 30S ribosomal subunit. Contacts protein S5. The interaction surface between S4 and S5 is involved in control of translational fidelity.

Its function is as follows. One of the primary rRNA binding proteins, it binds directly to 16S rRNA where it nucleates assembly of the body of the 30S subunit. Functionally, with S5 and S12 plays an important role in translational accuracy. This Rhodopseudomonas palustris (strain BisA53) protein is Small ribosomal subunit protein uS4.